Here is a 459-residue protein sequence, read N- to C-terminus: tRNA modification GTPase MnmE (459 aa).

(6S)-5-formyl-5,6,7,8-tetrahydrofolate is bound by residues Arg22, Glu87, and Arg126. In terms of domain architecture, TrmE-type G spans 221–381 (GINVAICGKP…LEESIEKAVL (161 aa)). Residue Asn231 coordinates K(+). Residues 231 to 236 (NVGKSS), 250 to 256 (TSIPGTT), and 275 to 278 (DTAG) each bind GTP. Ser235 is a Mg(2+) binding site. K(+) contacts are provided by Thr250, Ile252, and Thr255. Thr256 provides a ligand contact to Mg(2+). Lys459 serves as a coordination point for (6S)-5-formyl-5,6,7,8-tetrahydrofolate.

Belongs to the TRAFAC class TrmE-Era-EngA-EngB-Septin-like GTPase superfamily. TrmE GTPase family. In terms of assembly, homodimer. Heterotetramer of two MnmE and two MnmG subunits. Requires K(+) as cofactor.

Its subcellular location is the cytoplasm. Exhibits a very high intrinsic GTPase hydrolysis rate. Involved in the addition of a carboxymethylaminomethyl (cmnm) group at the wobble position (U34) of certain tRNAs, forming tRNA-cmnm(5)s(2)U34. In Syntrophomonas wolfei subsp. wolfei (strain DSM 2245B / Goettingen), this protein is tRNA modification GTPase MnmE.